The following is a 270-amino-acid chain: L-aspartate dehydrogenase (270 aa).

2 residues coordinate NAD(+): alanine 123 and asparagine 191. Histidine 221 is an active-site residue.

Belongs to the L-aspartate dehydrogenase family.

The catalysed reaction is L-aspartate + NADP(+) + H2O = oxaloacetate + NH4(+) + NADPH + H(+). It catalyses the reaction L-aspartate + NAD(+) + H2O = oxaloacetate + NH4(+) + NADH + H(+). It functions in the pathway cofactor biosynthesis; NAD(+) biosynthesis; iminoaspartate from L-aspartate (dehydrogenase route): step 1/1. In terms of biological role, specifically catalyzes the NAD or NADP-dependent dehydrogenation of L-aspartate to iminoaspartate. The polypeptide is L-aspartate dehydrogenase (Methanocella arvoryzae (strain DSM 22066 / NBRC 105507 / MRE50)).